A 614-amino-acid chain; its full sequence is Adenylate kinase 7 (614 aa).

The tract at residues 258–503 is adenylate kinase; sequence PIKICILGPP…KEIGKPRNYG (246 aa). Residue 268–273 participates in ATP binding; sequence AVGKSS. Residues 288–346 are NMP; that stretch reads KMKDVIAEAIAKLEAIVAPKDSVEGEEEGEEEEEEENVDDAQELLDGIKESMEQNAGRL. Residues 308–327 are disordered; it reads DSVEGEEEGEEEEEEENVDD. Acidic residues predominate over residues 311–327; the sequence is EGEEEGEEEEEEENVDD. AMP-binding positions include 323–346, 373–376, and Gln-380; these read ENVD…AGRL and GFPK. Residues 376-568 are a coiled coil; the sequence is KTYDQAKDLF…EERELLEVQS (193 aa). Residues 428-438 are LID; it reads NLPESVVAGTH. Position 446 (Arg-446) interacts with AMP. ATP is bound at residue Gly-478. A DPY-30 region spans residues 570 to 614; that stretch reads PLRNYLMTYVMPTLMQGLNECCKVRPEDPVDFLAEYLFKNNPEMQ.

It in the central section; belongs to the adenylate kinase family. In the C-terminal section; belongs to the dpy-30 family.

It is found in the cytoplasm. It localises to the cytosol. The protein localises to the cell projection. The protein resides in the cilium. Its subcellular location is the flagellum. The catalysed reaction is AMP + ATP = 2 ADP. It carries out the reaction a 2'-deoxyribonucleoside 5'-diphosphate + ATP = a 2'-deoxyribonucleoside 5'-triphosphate + ADP. The enzyme catalyses a ribonucleoside 5'-diphosphate + ATP = a ribonucleoside 5'-triphosphate + ADP. Nucleoside monophosphate (NMP) kinase that catalyzes the reversible transfer of the terminal phosphate group between nucleoside triphosphates and monophosphates. Has highest activity toward AMP, and weaker activity toward dAMP, CMP and dCMP. Also displays broad nucleoside diphosphate kinase activity. Involved in maintaining ciliary structure and function. This is Adenylate kinase 7 (Ak7) from Mus musculus (Mouse).